The primary structure comprises 417 residues: C4-dicarboxylate transport protein (417 aa).

8 consecutive transmembrane segments (helical) span residues 4-26 (IYVQ…PQIG), 41-60 (KLVI…ARMG), 72-94 (ALIY…GRLI), 137-159 (FIGA…TGFA), 180-202 (LFFG…AMGF), 217-239 (ALVA…GIAW), 285-307 (VVGL…YMTL), and 347-369 (FITL…AILV).

The protein belongs to the dicarboxylate/amino acid:cation symporter (DAACS) (TC 2.A.23) family.

It localises to the cell inner membrane. Functionally, responsible for the transport of dicarboxylates such as succinate, fumarate, and malate from the periplasm across the membrane. In Caulobacter vibrioides (strain ATCC 19089 / CIP 103742 / CB 15) (Caulobacter crescentus), this protein is C4-dicarboxylate transport protein.